Reading from the N-terminus, the 374-residue chain is Putative 2,3-diketo-5-methylthiopentyl-1-phosphate enolase (374 aa).

Residues lysine 138, 164–167 (QDDE), histidine 255, glycine 327, and 349–350 (GG) each bind substrate. Aspartate 166 is a binding site for Mg(2+).

Belongs to the RuBisCO large chain family. Type IV subfamily. Homodimer. It depends on Mg(2+) as a cofactor.

The catalysed reaction is 5-methylsulfanyl-2,3-dioxopentyl phosphate = 2-hydroxy-5-methylsulfanyl-3-oxopent-1-enyl phosphate. It participates in amino-acid biosynthesis; L-methionine biosynthesis via salvage pathway; L-methionine from S-methyl-5-thio-alpha-D-ribose 1-phosphate: step 3/6. Functionally, catalyzes the enolization of 2,3-diketo-5-methylthiopentyl-1-phosphate (DK-MTP-1-P) into 2-hydroxy-3-keto-5-methylthiopentenyl-1-phosphate (HK-MTPenyl-1-P). The chain is Putative 2,3-diketo-5-methylthiopentyl-1-phosphate enolase (mtnW) from Shouchella clausii (strain KSM-K16) (Alkalihalobacillus clausii).